Here is a 26-residue protein sequence, read N- to C-terminus: Conotoxin reg6(gamma) (26 aa).

Over residues 1-12 (RVLEPGXEDPDV) the composition is skewed to acidic residues. Positions 1 to 26 (RVLEPGXEDPDVGEPAGEYEHHLLEX) are disordered. Position 4 is a 4-carboxyglutamate (glutamate 4). A 4-hydroxyproline modification is found at proline 5. Glutamate 8 carries the 4-carboxyglutamate modification. Proline 10 is subject to 4-hydroxyproline. At glutamate 14 the chain carries 4-carboxyglutamate. Proline 15 is subject to 4-hydroxyproline. A 4-carboxyglutamate mark is found at glutamate 18, glutamate 20, and glutamate 25.

As to expression, expressed by the venom duct.

Its subcellular location is the secreted. The polypeptide is Conotoxin reg6(gamma) (Conus regius (Crown cone)).